A 257-amino-acid chain; its full sequence is Ras-related protein Rab-26 (257 aa).

Positions 1–53 are disordered; sequence MSRKKTPKSKGGSVPAASTLPAAANGPRLAHPRTARPGPEAPPNGPPQSGRPS. GTP is bound by residues Ser-73, Gly-74, Val-75, Gly-76, Lys-77, Thr-78, Cys-79, Ser-96, and Thr-97. Thr-78 is a Mg(2+) binding site. 2 consecutive short sequence motifs (switch) follow at residues 87–102 and 120–137; these read GAFL…GIDF and DTAG…YYRD. Mg(2+) is bound by residues Thr-97 and Asp-120. Positions 123, 178, 179, 181, 209, and 210 each coordinate GTP. Residues Cys-254 and Cys-255 are each lipidated (S-geranylgeranyl cysteine).

The protein belongs to the small GTPase superfamily. Rab family. In terms of assembly, interacts with ADRA2B. Interacts with RIMS1. Mg(2+) is required as a cofactor. As to expression, expressed in pancreas, kidney, brain, submandibular gland, and lung.

It is found in the cytoplasmic vesicle. The protein localises to the secretory vesicle membrane. Its subcellular location is the golgi apparatus membrane. The catalysed reaction is GTP + H2O = GDP + phosphate + H(+). With respect to regulation, regulated by guanine nucleotide exchange factors (GEFs) which promote the exchange of bound GDP for free GTP. Regulated by GTPase activating proteins (GAPs) which increase the GTP hydrolysis activity. Inhibited by GDP dissociation inhibitors (GDIs). Its function is as follows. The small GTPases Rab are key regulators of intracellular membrane trafficking, from the formation of transport vesicles to their fusion with membranes. Rabs cycle between an inactive GDP-bound form and an active GTP-bound form that is able to recruit to membranes different set of downstream effectors directly responsible for vesicle formation, movement, tethering and fusion. RAB26 mediates transport of ADRA2A and ADRA2B from the Golgi to the cell membrane. Plays a role in the maturation of zymogenic granules and in pepsinogen secretion in the stomach. Plays a role in the secretion of amylase from acinar granules in the parotid gland. This is Ras-related protein Rab-26 from Rattus norvegicus (Rat).